Here is a 146-residue protein sequence, read N- to C-terminus: Hemoglobin subunit beta (146 aa).

N-acetylvaline is present on Val1. The Globin domain occupies 2–146 (HLTDAEKAAI…VATALGHKYH (145 aa)). Lys59 is modified (N6-acetyllysine). Residue His63 coordinates heme b. Position 82 is an N6-acetyllysine (Lys82). His92 provides a ligand contact to heme b. At Cys93 the chain carries S-nitrosocysteine. Lys144 carries the post-translational modification N6-acetyllysine.

It belongs to the globin family. As to quaternary structure, heterotetramer of two alpha chains and two beta chains. As to expression, red blood cells.

Functionally, involved in oxygen transport from the lung to the various peripheral tissues. This Ondatra zibethicus (Muskrat) protein is Hemoglobin subunit beta (HBB).